The chain runs to 132 residues: Small ribosomal subunit protein uS8 (132 aa).

Belongs to the universal ribosomal protein uS8 family. As to quaternary structure, part of the 30S ribosomal subunit. Contacts proteins S5 and S12.

In terms of biological role, one of the primary rRNA binding proteins, it binds directly to 16S rRNA central domain where it helps coordinate assembly of the platform of the 30S subunit. In Rhizobium rhizogenes (strain K84 / ATCC BAA-868) (Agrobacterium radiobacter), this protein is Small ribosomal subunit protein uS8.